The sequence spans 83 residues: uncharacterized protein (83 aa).

The disordered stretch occupies residues 57-83 (ESVEEEEEFEDYDEFEEEEEYYYDDEY).

This is an uncharacterized protein from Archaeoglobus fulgidus (strain ATCC 49558 / DSM 4304 / JCM 9628 / NBRC 100126 / VC-16).